A 624-amino-acid chain; its full sequence is Chaperone protein HtpG (624 aa).

The segment at 1–336 (MKGQETRGFQ…SNDLPLNVSR (336 aa)) is a; substrate-binding. Residues 337-552 (EILQDSTVTR…ADEMSTQMAK (216 aa)) form a b region. The interval 553–624 (LFAAAGQSVP…IRRMNQLLVS (72 aa)) is c.

The protein belongs to the heat shock protein 90 family. Homodimer.

It is found in the cytoplasm. In terms of biological role, molecular chaperone. Has ATPase activity. In Salmonella paratyphi A (strain ATCC 9150 / SARB42), this protein is Chaperone protein HtpG.